We begin with the raw amino-acid sequence, 1052 residues long: Suppressor of RPS4-RLD 1 (1052 aa).

The residue at position 2 (A2) is an N-acetylalanine. 2 TPR repeats span residues 39–72 (ILDI…EPFA) and 74–106 (QAFI…ALQQ). The stretch at 107-136 (TADVKQLLELEELLKDARREIDGILKSHAT) forms a coiled coil. Residues 131-181 (LKSHATESPQETPAYHSEKSDEKSDKLDNHESGASSNGNSHESSSELGEQS) form a disordered region. Positions 146 to 161 (HSEKSDEKSDKLDNHE) are enriched in basic and acidic residues. A compositionally biased stretch (low complexity) spans 162–181 (SGASSNGNSHESSSELGEQS). 9 TPR repeats span residues 297-330 (VDFR…EPTY), 331-364 (PEAL…NPAA), 365-398 (SEAW…EPNS), 400-432 (DVLH…EKDN), 433-466 (KSAY…DSNY), 468-500 (EAWL…DNRV), 502-534 (KAYH…ENTI), 535-567 (ECLY…ELDA), and 569-591 (EKFV…ASKV). The disordered stretch occupies residues 704 to 739 (STKGTTKNGKKNRRRERTNILSQNRGGAGCSSSSFS). The helical transmembrane segment at 966 to 986 (GTAVTGFVVLLGLLLAANMEF) threads the bilayer.

In terms of assembly, multimer. Interacts with EDS1. Interacts with SNC1 and RPS4. Interacts (via TPR domain) with SGT1 (via TPR domain). Interacts with the TCP transcription factors TCP8, TCP14, TCP15, TCP20, TCP22 and TCP23. Ubiquitous. Not detected in very young flowers and older siliques.

The protein resides in the nucleus. The protein localises to the cytoplasm. Its subcellular location is the perinuclear region. It is found in the membrane. It localises to the microsome. In terms of biological role, negative regulator of effector-triggered immunity associated with the EDS1 resistance pathway. May localize its interactors to a microsomal membrane. May therefore negatively regulate RPS4 and SNC1 translocation to the nucleus. Contributes to the regulation of RPS2 and RPS4 protein levels and negatively regulates SNC1 stability. The chain is Suppressor of RPS4-RLD 1 from Arabidopsis thaliana (Mouse-ear cress).